A 508-amino-acid polypeptide reads, in one-letter code: Photosystem II CP47 reaction center protein (508 aa).

6 helical membrane passes run 21–36 (SVHIMHTGLVSGWAGS), 101–115 (IILAGLMFLASMWHW), 140–156 (GIHLFLSGLLCFGFGAF), 203–218 (IAAGILGILAGLFHLS), 237–252 (VLSSSIAAVFWAAFVV), and 457–472 (CFALLFFFGHIWHGAR).

Belongs to the PsbB/PsbC family. PsbB subfamily. As to quaternary structure, PSII is composed of 1 copy each of membrane proteins PsbA, PsbB, PsbC, PsbD, PsbE, PsbF, PsbH, PsbI, PsbJ, PsbK, PsbL, PsbM, PsbT, PsbX, PsbY, PsbZ, Psb30/Ycf12, at least 3 peripheral proteins of the oxygen-evolving complex and a large number of cofactors. It forms dimeric complexes. It depends on Binds multiple chlorophylls. PSII binds additional chlorophylls, carotenoids and specific lipids. as a cofactor.

Its subcellular location is the plastid. It localises to the chloroplast thylakoid membrane. Its function is as follows. One of the components of the core complex of photosystem II (PSII). It binds chlorophyll and helps catalyze the primary light-induced photochemical processes of PSII. PSII is a light-driven water:plastoquinone oxidoreductase, using light energy to abstract electrons from H(2)O, generating O(2) and a proton gradient subsequently used for ATP formation. The chain is Photosystem II CP47 reaction center protein from Mesostigma viride (Green alga).